The sequence spans 127 residues: Large ribosomal subunit protein eL8 (127 aa).

Belongs to the eukaryotic ribosomal protein eL8 family. Part of the 50S ribosomal subunit. Probably part of the RNase P complex.

The protein localises to the cytoplasm. Functionally, multifunctional RNA-binding protein that recognizes the K-turn motif in ribosomal RNA, the RNA component of RNase P, box H/ACA, box C/D and box C'/D' sRNAs. In Hyperthermus butylicus (strain DSM 5456 / JCM 9403 / PLM1-5), this protein is Large ribosomal subunit protein eL8.